We begin with the raw amino-acid sequence, 503 residues long: ATP synthase subunit alpha (503 aa).

ATP is bound at residue 170 to 177 (GDKQTGKT).

Belongs to the ATPase alpha/beta chains family. F-type ATPases have 2 components, CF(1) - the catalytic core - and CF(0) - the membrane proton channel. CF(1) has five subunits: alpha(3), beta(3), gamma(1), delta(1), epsilon(1). CF(0) has three main subunits: a(1), b(2) and c(9-12). The alpha and beta chains form an alternating ring which encloses part of the gamma chain. CF(1) is attached to CF(0) by a central stalk formed by the gamma and epsilon chains, while a peripheral stalk is formed by the delta and b chains.

The protein resides in the cell inner membrane. It catalyses the reaction ATP + H2O + 4 H(+)(in) = ADP + phosphate + 5 H(+)(out). Its function is as follows. Produces ATP from ADP in the presence of a proton gradient across the membrane. The alpha chain is a regulatory subunit. The polypeptide is ATP synthase subunit alpha (Helicobacter pylori (strain J99 / ATCC 700824) (Campylobacter pylori J99)).